The sequence spans 1360 residues: DNA-directed RNA polymerase subunit beta (1360 aa).

This sequence belongs to the RNA polymerase beta chain family. The RNAP catalytic core consists of 2 alpha, 1 beta, 1 beta' and 1 omega subunit. When a sigma factor is associated with the core the holoenzyme is formed, which can initiate transcription.

It carries out the reaction RNA(n) + a ribonucleoside 5'-triphosphate = RNA(n+1) + diphosphate. Its function is as follows. DNA-dependent RNA polymerase catalyzes the transcription of DNA into RNA using the four ribonucleoside triphosphates as substrates. The protein is DNA-directed RNA polymerase subunit beta of Ruthia magnifica subsp. Calyptogena magnifica.